Reading from the N-terminus, the 361-residue chain is Versatile peroxidase VPL2 (361 aa).

The first 22 residues, 1–22, serve as a signal peptide directing secretion; the sequence is MSFKTLSALALALGAAVQFASA. Residues 23-30 constitute a propeptide that is removed on maturation; that stretch reads AVPLVQKR. Disulfide bonds link Cys-33–Cys-45, Cys-44–Cys-308, Cys-64–Cys-144, and Cys-272–Cys-337. 2 residues coordinate Mn(2+): Glu-66 and Glu-70. The active-site Proton acceptor is the His-77. 4 residues coordinate Ca(2+): Asp-78, Gly-90, Asp-92, and Ser-94. N-linked (GlcNAc...) asparagine glycosylation is present at Asn-126. The active-site Tryptophan radical intermediate is the Trp-194. His-199 contacts heme b. Position 200 (Ser-200) interacts with Ca(2+). 203–207 contacts heme b; sequence AADKV. Asp-205 is a Mn(2+) binding site. Ca(2+) is bound by residues Asp-217, Thr-219, Val-222, and Asp-224.

The protein belongs to the peroxidase family. Ligninase subfamily. Heme b serves as cofactor. Ca(2+) is required as a cofactor.

The protein localises to the secreted. It carries out the reaction 1-(4-hydroxy-3-methoxyphenyl)-2-(2-methoxyphenoxy)propane-1,3-diol + H2O2 = guaiacol + vanillin + glycolaldehyde + H2O. The catalysed reaction is 2 Mn(2+) + H2O2 + 2 H(+) = 2 Mn(3+) + 2 H2O. A versatile ligninolytic peroxidase that combines the substrate specificity characteristics of the two other ligninolytic peroxidases, manganese peroxidase and lignin peroxidase. The chain is Versatile peroxidase VPL2 (vpl2) from Pleurotus eryngii (Boletus of the steppes).